The following is a 438-amino-acid chain: RING finger protein 150 (438 aa).

The signal sequence occupies residues 1-34; that stretch reads MAMSLIQACCSLALSTWLLSFCFVHLLCLDFTVA. At 35-208 the chain is on the extracellular side; sequence EKEEWYTAFV…NLQKYVSRTS (174 aa). 4 N-linked (GlcNAc...) asparagine glycosylation sites follow: Asn-45, Asn-125, Asn-153, and Asn-186. In terms of domain architecture, PA spans 81-183; it reads SPKQDARGEV…PKGKEIVSLL (103 aa). Residues 209 to 229 form a helical membrane-spanning segment; it reads VVFVSISFIVLMIISLAWLVF. Topologically, residues 230-438 are cytoplasmic; that stretch reads YYIQRFRYAN…TDQDCEEVKS (209 aa). The RING-type; atypical zinc finger occupies 278–319; that stretch reads CAVCIEGYKPNDVVRILPCRHLFHKSCVDPWLLDHRTCPMCK.

The protein localises to the membrane. This is RING finger protein 150 (RNF150) from Homo sapiens (Human).